The following is a 338-amino-acid chain: Phosphatidate cytidylyltransferase, mitochondrial (338 aa).

Belongs to the TAM41 family. Mg(2+) is required as a cofactor.

Its subcellular location is the mitochondrion inner membrane. It carries out the reaction a 1,2-diacyl-sn-glycero-3-phosphate + CTP + H(+) = a CDP-1,2-diacyl-sn-glycerol + diphosphate. It participates in phospholipid metabolism; CDP-diacylglycerol biosynthesis; CDP-diacylglycerol from sn-glycerol 3-phosphate: step 3/3. In terms of biological role, catalyzes the conversion of phosphatidic acid (PA) to CDP-diacylglycerol (CDP-DAG), an essential intermediate in the synthesis of phosphatidylglycerol, cardiolipin and phosphatidylinositol. The chain is Phosphatidate cytidylyltransferase, mitochondrial (tamm41) from Danio rerio (Zebrafish).